A 131-amino-acid chain; its full sequence is Histone H2A.1 (131 aa).

N-acetylserine is present on Ser2. Lys4 and Lys7 each carry N6-acetyllysine. The residue at position 105 (Gln105) is an N5-methylglutamine. Lys126 is covalently cross-linked (Glycyl lysine isopeptide (Lys-Gly) (interchain with G-Cter in SUMO)). At Ser128 the chain carries Phosphoserine. Positions 128-129 (SQ) match the [ST]-Q motif motif.

This sequence belongs to the histone H2A family. The nucleosome is a histone octamer containing two molecules each of H2A, H2B, H3 and H4 assembled in one H3-H4 heterotetramer and two H2A-H2B heterodimers. The octamer wraps approximately 147 bp of DNA. Post-translationally, phosphorylated to form H2AS128ph (gamma-H2A) in response to DNA double-strand breaks (DSBs) generated by exogenous genotoxic agents and by stalled replication forks. Phosphorylation is dependent on the DNA damage checkpoint kinases MEC1/ATR and TEL1/ATM, spreads on either side of a detected DSB site and may mark the surrounding chromatin for recruitment of proteins required for DNA damage signaling and repair. Gamma-H2A is removed from the DNA prior to the strand invasion-primer extension step of the repair process and subsequently dephosphorylated by PPH3, a component of the histone H2A phosphatase complex (HTP-C). Dephosphorylation is necessary for efficient recovery from the DNA damage checkpoint. Sumoylation on Lys-126 may lead to transcriptional repression. In terms of processing, acetylated by ESA1 to form H2AK4ac and H2AK7ac.

Its subcellular location is the nucleus. It localises to the chromosome. In terms of biological role, core component of nucleosome which plays a central role in DNA double strand break (DSB) repair. Nucleosomes wrap and compact DNA into chromatin, limiting DNA accessibility to the cellular machineries which require DNA as a template. Histones thereby play a central role in transcription regulation, DNA repair, DNA replication and chromosomal stability. DNA accessibility is regulated via a complex set of post-translational modifications of histones, also called histone code, and nucleosome remodeling. This Eremothecium gossypii (strain ATCC 10895 / CBS 109.51 / FGSC 9923 / NRRL Y-1056) (Yeast) protein is Histone H2A.1 (HTA1).